The following is a 644-amino-acid chain: Chaperone protein DnaK (644 aa).

Thr-195 is subject to Phosphothreonine; by autocatalysis. The disordered stretch occupies residues 598 to 644 (KQAAPGAGAPGAGPGPEAAGGAQQAQAEPKKDEGVIDAEYVDVDEKK). Positions 612-624 (GPEAAGGAQQAQA) are enriched in low complexity. Positions 632–644 (VIDAEYVDVDEKK) are enriched in acidic residues.

Belongs to the heat shock protein 70 family.

Its function is as follows. Acts as a chaperone. This Koribacter versatilis (strain Ellin345) protein is Chaperone protein DnaK.